The sequence spans 249 residues: Imidazole glycerol phosphate synthase subunit HisF (249 aa).

Active-site residues include Asp-11 and Asp-130.

This sequence belongs to the HisA/HisF family. In terms of assembly, heterodimer of HisH and HisF.

Its subcellular location is the cytoplasm. The catalysed reaction is 5-[(5-phospho-1-deoxy-D-ribulos-1-ylimino)methylamino]-1-(5-phospho-beta-D-ribosyl)imidazole-4-carboxamide + L-glutamine = D-erythro-1-(imidazol-4-yl)glycerol 3-phosphate + 5-amino-1-(5-phospho-beta-D-ribosyl)imidazole-4-carboxamide + L-glutamate + H(+). The protein operates within amino-acid biosynthesis; L-histidine biosynthesis; L-histidine from 5-phospho-alpha-D-ribose 1-diphosphate: step 5/9. Functionally, IGPS catalyzes the conversion of PRFAR and glutamine to IGP, AICAR and glutamate. The HisF subunit catalyzes the cyclization activity that produces IGP and AICAR from PRFAR using the ammonia provided by the HisH subunit. In Sulfolobus acidocaldarius (strain ATCC 33909 / DSM 639 / JCM 8929 / NBRC 15157 / NCIMB 11770), this protein is Imidazole glycerol phosphate synthase subunit HisF.